We begin with the raw amino-acid sequence, 667 residues long: DNA ligase (667 aa).

NAD(+) contacts are provided by residues 32–36 and 80–81; these read DKDYD and SL. Lys121 (N6-AMP-lysine intermediate) is an active-site residue. The NAD(+) site is built by Arg143, Glu178, and Lys314. Residues Cys407, Cys410, Cys423, and Cys429 each coordinate Zn(2+). Residues 587-667 form the BRCT domain; the sequence is IVESIFKDKT…EFEKMLGRES (81 aa).

The protein belongs to the NAD-dependent DNA ligase family. LigA subfamily. Mg(2+) is required as a cofactor. Mn(2+) serves as cofactor.

It catalyses the reaction NAD(+) + (deoxyribonucleotide)n-3'-hydroxyl + 5'-phospho-(deoxyribonucleotide)m = (deoxyribonucleotide)n+m + AMP + beta-nicotinamide D-nucleotide.. Functionally, DNA ligase that catalyzes the formation of phosphodiester linkages between 5'-phosphoryl and 3'-hydroxyl groups in double-stranded DNA using NAD as a coenzyme and as the energy source for the reaction. It is essential for DNA replication and repair of damaged DNA. The chain is DNA ligase from Clostridium botulinum (strain Alaska E43 / Type E3).